The primary structure comprises 691 residues: MSALLQDPMIAGQVSKPLLSVRSEMNAELRGEDKAATSDSELNEPLLAPVESNDSEDTPSKLFGARGNPALSDPGTPDQHQASQTHPPFPVGPQPLLTAQQLASAVAGVMPGGPPALNQPILIPFNMAGQLGGQQGLVLTLPTANLTNIQGLVAAAAAGGIMTLPLQNLQATSSLNSQLQQLQLQLQQQQQQQQQQPPPSTNQHPQPAPQAPSQSQQQPLQPTPPQQPPPASQQPPAPTSQLQQAPQPQQHQPHSHSQNQNQPSPTQQSSSPPQKPSQSPGHGLPSPLTPPNPLQLVNNPLASQAAAAAAAMSSIASSQAFGNALSSLQGVTGQLVTNAQGQIIGTIPLMPNPGPSSQAASGTQGLQVQPITPQLLTNAQGQIIATVIGNQILPVINTQGITLSPIKPGQQLHQPSQTSVGQAASQGNLLHLAHSQASMSQSPVRQASSSSSSSSSSSALSVGQLVSNPQTAAGEVDGVNLEEIREFAKAFKIRRLSLGLTQTQVGQALSATEGPAYSQSAICRHTILRSHFFLPQEAQENTIASSLTAKLNPGLLYPARFEKLDITPKSAQKIKPVLERWMAEAEARHRAGMQNLTEFIGSEPSKKRKRRTSFTPQALEILNAHFEKNTHPSGQEMTEIAEKLNYDREVVRVWFCNKRQALKNTIKRLKQHEPATAVPLEPLTDSLEENS.

Residues 25 to 36 (MNAELRGEDKAA) are compositionally biased toward basic and acidic residues. Disordered regions lie at residues 25 to 93 (MNAE…PVGP), 186 to 297 (LQQQ…LQLV), and 435 to 461 (SQAS…SALS). Residues 186-195 (LQQQQQQQQQ) are compositionally biased toward low complexity. The span at 196 to 210 (QPPPSTNQHPQPAPQ) shows a compositional bias: pro residues. Residues 211–220 (APSQSQQQPL) show a composition bias toward low complexity. A compositionally biased stretch (pro residues) spans 221–238 (QPTPPQQPPPASQQPPAP). Composition is skewed to low complexity over residues 239 to 280 (TSQL…SQSP) and 438 to 461 (SMSQ…SALS). Residues 476–586 (VDGVNLEEIR…VLERWMAEAE (111 aa)) form the POU-specific domain. A DNA-binding region (homeobox) is located at residues 607-666 (KRKRRTSFTPQALEILNAHFEKNTHPSGQEMTEIAEKLNYDREVVRVWFCNKRQALKNTI).

Belongs to the POU transcription factor family. Class-6 subfamily. Expressed only within the CNS, where its expression is restricted to the medical habenulla, to a dispersed population of neurons in the dorsal hypothalamus, and to subsets of ganglion and amacrine cells in the retina.

It localises to the nucleus. Its function is as follows. Probable transcription factor likely to be involved in early steps in the differentiation of amacrine and ganglion cells. Recognizes and binds to the DNA sequence 5'-ATGCAAAT-3'. Isoform 1 does not bind DNA. The sequence is that of POU domain, class 6, transcription factor 2 (POU6F2) from Homo sapiens (Human).